Here is a 264-residue protein sequence, read N- to C-terminus: S-adenosylmethionine decarboxylase proenzyme (264 aa).

The active-site Schiff-base intermediate with substrate; via pyruvic acid is the Ser114. Ser114 carries the post-translational modification Pyruvic acid (Ser); by autocatalysis. The active-site Proton acceptor; for processing activity is the His119. Cys142 (proton donor; for catalytic activity) is an active-site residue.

This sequence belongs to the prokaryotic AdoMetDC family. Type 2 subfamily. In terms of assembly, heterooctamer of four alpha and four beta chains arranged as a tetramer of alpha/beta heterodimers. The cofactor is pyruvate. In terms of processing, is synthesized initially as an inactive proenzyme. Formation of the active enzyme involves a self-maturation process in which the active site pyruvoyl group is generated from an internal serine residue via an autocatalytic post-translational modification. Two non-identical subunits are generated from the proenzyme in this reaction, and the pyruvate is formed at the N-terminus of the alpha chain, which is derived from the carboxyl end of the proenzyme. The post-translation cleavage follows an unusual pathway, termed non-hydrolytic serinolysis, in which the side chain hydroxyl group of the serine supplies its oxygen atom to form the C-terminus of the beta chain, while the remainder of the serine residue undergoes an oxidative deamination to produce ammonia and the pyruvoyl group blocking the N-terminus of the alpha chain.

It catalyses the reaction S-adenosyl-L-methionine + H(+) = S-adenosyl 3-(methylsulfanyl)propylamine + CO2. It functions in the pathway amine and polyamine biosynthesis; S-adenosylmethioninamine biosynthesis; S-adenosylmethioninamine from S-adenosyl-L-methionine: step 1/1. Its function is as follows. Catalyzes the decarboxylation of S-adenosylmethionine to S-adenosylmethioninamine (dcAdoMet), the propylamine donor required for the synthesis of the polyamines spermine and spermidine from the diamine putrescine. In Chromohalobacter salexigens (strain ATCC BAA-138 / DSM 3043 / CIP 106854 / NCIMB 13768 / 1H11), this protein is S-adenosylmethionine decarboxylase proenzyme.